Reading from the N-terminus, the 78-residue chain is Large ribosomal subunit protein bL28 (78 aa).

The tract at residues methionine 1–proline 31 is disordered.

The protein belongs to the bacterial ribosomal protein bL28 family.

The sequence is that of Large ribosomal subunit protein bL28 from Pseudarthrobacter chlorophenolicus (strain ATCC 700700 / DSM 12829 / CIP 107037 / JCM 12360 / KCTC 9906 / NCIMB 13794 / A6) (Arthrobacter chlorophenolicus).